A 242-amino-acid polypeptide reads, in one-letter code: Probable transcriptional regulatory protein LBA0733 (242 aa).

The tract at residues 1–22 is disordered; sequence MSGHSKWHNIQGRKNAQDAKRG.

This sequence belongs to the TACO1 family.

The protein resides in the cytoplasm. The sequence is that of Probable transcriptional regulatory protein LBA0733 from Lactobacillus acidophilus (strain ATCC 700396 / NCK56 / N2 / NCFM).